The sequence spans 355 residues: UDP-N-acetylglucosamine--N-acetylmuramyl-(pentapeptide) pyrophosphoryl-undecaprenol N-acetylglucosamine transferase (355 aa).

UDP-N-acetyl-alpha-D-glucosamine is bound by residues 14-16 (TGG), Asn126, Arg162, Ser190, Ile245, 264-269 (ALTVCE), and Gln289.

Belongs to the glycosyltransferase 28 family. MurG subfamily.

The protein localises to the cell inner membrane. It catalyses the reaction di-trans,octa-cis-undecaprenyl diphospho-N-acetyl-alpha-D-muramoyl-L-alanyl-D-glutamyl-meso-2,6-diaminopimeloyl-D-alanyl-D-alanine + UDP-N-acetyl-alpha-D-glucosamine = di-trans,octa-cis-undecaprenyl diphospho-[N-acetyl-alpha-D-glucosaminyl-(1-&gt;4)]-N-acetyl-alpha-D-muramoyl-L-alanyl-D-glutamyl-meso-2,6-diaminopimeloyl-D-alanyl-D-alanine + UDP + H(+). It functions in the pathway cell wall biogenesis; peptidoglycan biosynthesis. Its function is as follows. Cell wall formation. Catalyzes the transfer of a GlcNAc subunit on undecaprenyl-pyrophosphoryl-MurNAc-pentapeptide (lipid intermediate I) to form undecaprenyl-pyrophosphoryl-MurNAc-(pentapeptide)GlcNAc (lipid intermediate II). The polypeptide is UDP-N-acetylglucosamine--N-acetylmuramyl-(pentapeptide) pyrophosphoryl-undecaprenol N-acetylglucosamine transferase (Mannheimia succiniciproducens (strain KCTC 0769BP / MBEL55E)).